The primary structure comprises 326 residues: Glutamine synthetase (326 aa).

The 82-residue stretch at 4–85 (FKLEYIWLDG…VMCEVMMPDG (82 aa)) folds into the GS beta-grasp domain. One can recognise a GS catalytic domain in the interval 83 to 326 (PDGHAHASNA…GDPYQIVRRF (244 aa)). Mg(2+) contacts are provided by glutamate 107 and glutamate 109. Residue glutamate 164 participates in ATP binding. The Mg(2+) site is built by glutamate 169 and glutamate 176. An L-glutamate-binding site is contributed by glutamate 275.

It belongs to the glutamine synthetase family. Homooctamer and homotetramer. It depends on Mg(2+) as a cofactor.

The protein localises to the cytoplasm. The catalysed reaction is L-glutamate + NH4(+) + ATP = L-glutamine + ADP + phosphate + H(+). Its activity is regulated as follows. Transferase activity is inhibited by NH(4)Cl. Functionally, catalyzes the ATP-dependent biosynthesis of glutamine from glutamate and ammonia. The chain is Glutamine synthetase from Rhizobium leguminosarum bv. phaseoli.